We begin with the raw amino-acid sequence, 299 residues long: HTH-type transcriptional regulator PgrR (299 aa).

The 58-residue stretch at 4–61 (EEIADLMAFVVVAEERSFTRAAARLSMAQSALSQIVRRIEERLGLRLLTRTTRSVVPT) folds into the HTH lysR-type domain. The H-T-H motif DNA-binding region spans 21-40 (FTRAAARLSMAQSALSQIVR).

The protein belongs to the LysR transcriptional regulatory family.

Regulates the expression of genes involved in peptidoglycan (PG) degradation. Could play a role in switch control between recycling and degradation of PG peptides. Negatively regulates the expression of the ycjY-ymjD-ymjC-mpaA operon by binding to the PgrR-box. In addition, other genes are predicted to be under the control of PgrR, including genes related to membrane formation and function. In Escherichia coli (strain K12), this protein is HTH-type transcriptional regulator PgrR (pgrR).